The sequence spans 114 residues: Prostate stem cell antigen (114 aa).

An N-terminal signal peptide occupies residues 1-11 (MAGLALQPGTA). In terms of domain architecture, UPAR/Ly6 spans 12–86 (LLCYSCKAQV…CCDTDLCNAS (75 aa)). Intrachain disulfides connect C14–C39, C17–C26, C32–C57, C61–C77, and C78–C83. Residue N31 is glycosylated (N-linked (GlcNAc...) asparagine). The GPI-anchor amidated serine moiety is linked to residue S86. A propeptide spans 86–114 (SGAHALQPAAAILALLPALGLLLWGPGQL) (removed in mature form).

In terms of assembly, interacts with CHRNA4. Post-translationally, N-glycosylated. As to expression, highly expressed in prostate (basal, secretory and neuroendocrine epithelium cells). Also found in bladder (transitional epithelium), placenta (trophoblasts), stomach (neuroendocrine cells), colon (neuroendocrine cells) and kidney (collecting ducts). Overexpressed in prostate cancers and expression is correlated with tumor stage, grade and androgen-independence. Highly expressed in prostate cancer bone metastases. Expressed in gastric epithelial cells, mainly in the isthmus (at protein level). Not detected in normal intestinal epithelium (at protein level). Expressed in brain cortex; expression is significantly increased in the front cortex of Alzheimer disease patients.

It is found in the cell membrane. In terms of biological role, may be involved in the regulation of cell proliferation. Has a cell-proliferation inhibition activity in vitro. Its function is as follows. May act as a modulator of nicotinic acetylcholine receptors (nAChRs) activity. In vitro inhibits nicotine-induced signaling probably implicating alpha-3:beta-2- or alpha-7-containing nAChRs. This Homo sapiens (Human) protein is Prostate stem cell antigen (PSCA).